Here is a 577-residue protein sequence, read N- to C-terminus: Phosphoethanolamine transferase EptC (577 aa).

Transmembrane regions (helical) follow at residues 17–37 (LGWA…IIYI), 44–64 (NGIR…FLFP), 69–89 (IIAA…LCYY), 119–139 (YFSL…VLLW), and 154–174 (VVSF…NTFI).

Belongs to the phosphoethanolamine transferase family. EptC/CptA subfamily. As to quaternary structure, forms a complex with an unidentified protein of approximately 36 kDa.

The protein localises to the cell inner membrane. The protein operates within bacterial outer membrane biogenesis; LPS core biosynthesis. Its function is as follows. Catalyzes the addition of a phosphoethanolamine moiety to the outer membrane lipopolysaccharide core. This Escherichia coli (strain K12) protein is Phosphoethanolamine transferase EptC (eptC).